Here is a 211-residue protein sequence, read N- to C-terminus: FMN-dependent NADH:quinone oxidoreductase (211 aa).

Residue 17–19 (SYS) coordinates FMN.

The protein belongs to the azoreductase type 1 family. As to quaternary structure, homodimer. FMN serves as cofactor.

The catalysed reaction is 2 a quinone + NADH + H(+) = 2 a 1,4-benzosemiquinone + NAD(+). The enzyme catalyses N,N-dimethyl-1,4-phenylenediamine + anthranilate + 2 NAD(+) = 2-(4-dimethylaminophenyl)diazenylbenzoate + 2 NADH + 2 H(+). Quinone reductase that provides resistance to thiol-specific stress caused by electrophilic quinones. In terms of biological role, also exhibits azoreductase activity. Catalyzes the reductive cleavage of the azo bond in aromatic azo compounds to the corresponding amines. This chain is FMN-dependent NADH:quinone oxidoreductase, found in Bacillus pumilus (strain SAFR-032).